Here is a 553-residue protein sequence, read N- to C-terminus: Formate--tetrahydrofolate ligase (553 aa).

56 to 63 (TPKGEGKT) is an ATP binding site.

This sequence belongs to the formate--tetrahydrofolate ligase family.

It carries out the reaction (6S)-5,6,7,8-tetrahydrofolate + formate + ATP = (6R)-10-formyltetrahydrofolate + ADP + phosphate. The protein operates within one-carbon metabolism; tetrahydrofolate interconversion. The sequence is that of Formate--tetrahydrofolate ligase from Haloarcula marismortui (strain ATCC 43049 / DSM 3752 / JCM 8966 / VKM B-1809) (Halobacterium marismortui).